Consider the following 188-residue polypeptide: Sec-independent protein translocase protein TatB (188 aa).

A helical membrane pass occupies residues 1 to 21 (MFDIGWSELVVIGVVALVAIG). The interval 147 to 188 (LPVPAETHALATTDLAPPDLAHPAPAHPEPTNSEPAKDAKAS) is disordered. The span at 160–170 (DLAPPDLAHPA) shows a compositional bias: low complexity.

The protein belongs to the TatB family. As to quaternary structure, the Tat system comprises two distinct complexes: a TatABC complex, containing multiple copies of TatA, TatB and TatC subunits, and a separate TatA complex, containing only TatA subunits. Substrates initially bind to the TatABC complex, which probably triggers association of the separate TatA complex to form the active translocon.

It localises to the cell inner membrane. Part of the twin-arginine translocation (Tat) system that transports large folded proteins containing a characteristic twin-arginine motif in their signal peptide across membranes. Together with TatC, TatB is part of a receptor directly interacting with Tat signal peptides. TatB may form an oligomeric binding site that transiently accommodates folded Tat precursor proteins before their translocation. This chain is Sec-independent protein translocase protein TatB, found in Rhodopseudomonas palustris (strain HaA2).